A 703-amino-acid polypeptide reads, in one-letter code: MAAPVGPVKFWRPGTEGPGVSISEERQSLAENSGTTVVYNPYAALSIEQQRQKLPVFKLRNHILYLIENYQTVVIVGETGCGKSTQIPQYLAEAGWTAEGRVVGVTQPRRVAAVTVAGRVAEERGAVLGHEVGYCIRFDDCTDQLATRIKFLTDGMLVREMMVDPLLTKYSVIMLDEAHERTLYTDIAIGLLKKIQKKRGDLRLIVASATLDADKFRDFFNQNETSDPARDTCVILTVEGRTFPVDIFYLQSPVPDYIKSTVETVVKIHQTEGDGDVLAFLTGQEEVETVVSMLIEQARALARTGMKRHLRVLPMYAGLPSFEQMKVFERVSRSVRKVIVATNVAETSITISGIVYVIDCGFVKLRAYNPRTAIECLVVVPVSQASANQRAGRGGRSRSGKCYRLYTEEAFDKLPQSTVPEMQRSNLAPVILQLKALGIDNVLRFHFMSPPPAQSMVQALELLYALGGLDKDCRLTEPLGMRIAEFPLNPMFAKMLLESGNFGCSQEILSIAAMMQIQNIFVVPPNQKSHAIRVHRKFAVEEGDHLTMLNIYEAFIKHNKDSKWCQEHFLNYKGLVRAATVREQLKKLLVKFQVPRKSSEGDPDLVLRCIVSGFFANAARFHSTGAYRTIRDDHELHIHPASVLYAEKPPRWVIYNEVIQTSKYYMRDVTAIESAWLLELAPHFYQQGTHLSLKAKRAKVQDP.

In terms of domain architecture, Helicase ATP-binding spans 64–229 (LYLIENYQTV…FNQNETSDPA (166 aa)). ATP is bound at residue 77–84 (GETGCGKS). A DEAH box motif is present at residues 176 to 179 (DEAH). Residues 261 to 438 (TVETVVKIHQ…PVILQLKALG (178 aa)) enclose the Helicase C-terminal domain.

Belongs to the DEAD box helicase family. DEAH subfamily. In terms of assembly, identified in the spliceosome C complex.

The catalysed reaction is ATP + H2O = ADP + phosphate + H(+). Its function is as follows. May be involved in pre-mRNA splicing. In Homo sapiens (Human), this protein is Probable ATP-dependent RNA helicase DHX35 (DHX35).